Reading from the N-terminus, the 64-residue chain is Temporin-ALe (64 aa).

Residues 1 to 22 form the signal peptide; the sequence is MFTLKKSLLLLFFLGTINLSLC. Positions 23-47 are excised as a propeptide; that stretch reads EQERNAEEERRDEPDERNAEVEKRF. L62 bears the Leucine amide mark.

Expressed by the skin glands.

The protein resides in the secreted. Its function is as follows. Antimicrobial peptide with activity against Gram-positive and Gram-negative bacteria and against fungi. Has been tested against S.aureus (MIC=1.25 ug/mL), B.pumilus (MIC=5.0 ug/mL), B.cereus (MIC=15.0 ug/mL), E.coli (MIC=1.25 ug/mL), B.dysenteriae (MIC=5.0 ug/mL), A.cacoaceticus (MIC=15.0 ug/mL), P.aeruginosa (MIC=5.0 ug/mL) and C.albicans (MIC=1.25 ug/mL). Also shows a weak hemolytic activity. This Amolops loloensis (Lolokou Sucker Frog) protein is Temporin-ALe.